The sequence spans 308 residues: uncharacterized protein (308 aa).

In terms of domain architecture, S4 RNA-binding spans 11–87 (KRLDSLLASL…LKLEVLFEDK (77 aa)). D131 is an active-site residue.

It belongs to the pseudouridine synthase RluA family.

It catalyses the reaction a uridine in RNA = a pseudouridine in RNA. This is an uncharacterized protein from Mycoplasma genitalium (strain ATCC 33530 / DSM 19775 / NCTC 10195 / G37) (Mycoplasmoides genitalium).